Here is a 93-residue protein sequence, read N- to C-terminus: Protein FMP16, mitochondrial (93 aa).

Residues 1-25 constitute a mitochondrion transit peptide; the sequence is MLRTTFLRTPRQLMRKSPRASFSIV. Residues 30-93 are disordered; sequence FPHLKNNQDE…EQNRPDDGVY (64 aa). Positions 35–93 are enriched in basic and acidic residues; it reads NNQDEAEKKEQGLFDSNKKRLDTLEHGKNPDYKQPGMEDLKKKGDDARIEQNRPDDGVY.

The protein localises to the mitochondrion. The protein is Protein FMP16, mitochondrial (FMP16) of Saccharomyces cerevisiae (strain ATCC 204508 / S288c) (Baker's yeast).